We begin with the raw amino-acid sequence, 247 residues long: Sugar fermentation stimulation protein homolog (247 aa).

Belongs to the SfsA family.

This Aeromonas salmonicida (strain A449) protein is Sugar fermentation stimulation protein homolog.